Consider the following 371-residue polypeptide: Histidinol-phosphate aminotransferase (371 aa).

Lys-232 bears the N6-(pyridoxal phosphate)lysine mark.

This sequence belongs to the class-II pyridoxal-phosphate-dependent aminotransferase family. Histidinol-phosphate aminotransferase subfamily. In terms of assembly, homodimer. Requires pyridoxal 5'-phosphate as cofactor.

The enzyme catalyses L-histidinol phosphate + 2-oxoglutarate = 3-(imidazol-4-yl)-2-oxopropyl phosphate + L-glutamate. It participates in amino-acid biosynthesis; L-histidine biosynthesis; L-histidine from 5-phospho-alpha-D-ribose 1-diphosphate: step 7/9. This is Histidinol-phosphate aminotransferase from Methylibium petroleiphilum (strain ATCC BAA-1232 / LMG 22953 / PM1).